The sequence spans 792 residues: MKLSEQWLREWVNPPVDTEKLTAQLTMAGLEVDSVKPAARTLEKVVVGEVIAREKHPDADRLSVCRVDVGEDEPLEIVCGAPNVRTGLKVAVVLVGGVVGDLKVKKTKLRGVVSNGMICSEREMGLSEQHEGIMELPADAPIGKNIQEYLTLDDYILDIELTPNRGDCASVRGIAREVGAINRLPIKGPNLVTVSATINDVFPVEVKAEKACPRYIGRVIRGVDSHSQTPLWICERLRRSGLRTIHPVVDVMNYVMLELGQPLHAFDLSRLVEGIEVRFAKADEKITLIDETEIALTERMLVIADKSRPQALAGIMGGANSAVNEKTEAIFLESAYFSPGEIALTARHYDMQTDSSYRFERGVDFKLQTLAMERATELLIQITGGSPGPLIEVCSETHLPKIPRIILRPERIKRLLGIEINEDEVSKLLELLGMRVVKEKNNWVVTVPSHRFDIKEEADLIEELAHLYGYDRIPQLRMEGEYTIAPFSETQLSSARLRCLMTDRGYHEAVTYSFVNDELQTLLNPEVTSIALSNPLTAEMNVMRTSLWPGLIQVLKYNQARQTHRIRLFEIGMCFNAAGNEWQQVTKLGGLVAGDAHSLQWAEKGRRVDFYDVKGDLSALFTLTRTEAHFRFAEGHHPALHPGQSAALYYKDQCIGYLGALHPELVDQLELTAAPFLFEMELNAIKTSILPKYHPLSKFPSIRRDIAIVVDRDVPVGNIEEEIKSTAGQLLIITQVFDIYESGKHIEFGKKSVALGLTFQDPSRTLIDGEVKQIIERVLAALERKFNAKLRA.

One can recognise a tRNA-binding domain in the interval 39–147; that stretch reads ARTLEKVVVG…ADAPIGKNIQ (109 aa). In terms of domain architecture, B5 spans 400–475; it reads PKIPRIILRP…HLYGYDRIPQ (76 aa). Residues D453, D459, E462, and E463 each contribute to the Mg(2+) site. In terms of domain architecture, FDX-ACB spans 697–791; that stretch reads SKFPSIRRDI…LERKFNAKLR (95 aa).

The protein belongs to the phenylalanyl-tRNA synthetase beta subunit family. Type 1 subfamily. As to quaternary structure, tetramer of two alpha and two beta subunits. Mg(2+) is required as a cofactor.

It localises to the cytoplasm. The catalysed reaction is tRNA(Phe) + L-phenylalanine + ATP = L-phenylalanyl-tRNA(Phe) + AMP + diphosphate + H(+). The chain is Phenylalanine--tRNA ligase beta subunit from Coxiella burnetii (strain RSA 493 / Nine Mile phase I).